Reading from the N-terminus, the 33-residue chain is Gastrin (33 aa).

A pyrrolidone carboxylic acid mark is found at glutamine 1 and glutamine 18. Sulfotyrosine is present on tyrosine 28. At phenylalanine 33 the chain carries Phenylalanine amide.

It belongs to the gastrin/cholecystokinin family.

The protein localises to the secreted. In terms of biological role, gastrin stimulates the stomach mucosa to produce and secrete hydrochloric acid and the pancreas to secrete its digestive enzymes. It also stimulates smooth muscle contraction and increases blood circulation and water secretion in the stomach and intestine. The protein is Gastrin (GAST) of Didelphis virginiana (North American opossum).